Consider the following 127-residue polypeptide: UPF0102 protein Gura_3756 (127 aa).

Belongs to the UPF0102 family.

The polypeptide is UPF0102 protein Gura_3756 (Geotalea uraniireducens (strain Rf4) (Geobacter uraniireducens)).